The chain runs to 388 residues: Lipid-A-disaccharide synthase (388 aa).

Belongs to the LpxB family.

The enzyme catalyses a lipid X + a UDP-2-N,3-O-bis[(3R)-3-hydroxyacyl]-alpha-D-glucosamine = a lipid A disaccharide + UDP + H(+). Its pathway is bacterial outer membrane biogenesis; LPS lipid A biosynthesis. Functionally, condensation of UDP-2,3-diacylglucosamine and 2,3-diacylglucosamine-1-phosphate to form lipid A disaccharide, a precursor of lipid A, a phosphorylated glycolipid that anchors the lipopolysaccharide to the outer membrane of the cell. The polypeptide is Lipid-A-disaccharide synthase (Burkholderia mallei (strain ATCC 23344)).